A 180-amino-acid polypeptide reads, in one-letter code: Oligoribonuclease (180 aa).

An Exonuclease domain is found at 7 to 170 (LIWIDLEMTG…DDIRDSINEL (164 aa)). Tyr128 is an active-site residue.

This sequence belongs to the oligoribonuclease family.

It localises to the cytoplasm. Its function is as follows. 3'-to-5' exoribonuclease specific for small oligoribonucleotides. This is Oligoribonuclease from Marinobacter nauticus (strain ATCC 700491 / DSM 11845 / VT8) (Marinobacter aquaeolei).